The sequence spans 632 residues: Epithelial sodium channel subunit alpha (632 aa).

Over 1–49 (MTKEEKNEKEALIEFFSSYRELFEFFCSNTTIHGAIRLVCSRRNRMKTA) the chain is Cytoplasmic. Residues 50 to 70 (FWLVLFLVTFGLMYWQFGLLF) traverse the membrane as a helical segment. At 71–520 (GQYFSYPVSI…SQWSLWFGSS (450 aa)) the chain is on the extracellular side. 10 disulfide bridges follow: C97-C264, C189-C196, C241-C248, C355-C440, C377-C417, C377-C436, C381-C432, C390-C417, C390-C440, and C392-C406. A helical transmembrane segment spans residues 521 to 541 (VLSVVEMLELVIDFVIIGVMI). Over 542–632 (LLHRYYYKKA…YYEENGGRRN (91 aa)) the chain is Cytoplasmic. Over residues 612–622 (SRSSSMRSNRS) the composition is skewed to low complexity. The tract at residues 612–632 (SRSSSMRSNRSYYEENGGRRN) is disordered. A compositionally biased stretch (basic and acidic residues) spans 623-632 (YYEENGGRRN).

Belongs to the amiloride-sensitive sodium channel (TC 1.A.6) family. SCNN1A subfamily. Heterotrimer; containing an alpha/SCNN1A, a beta/SCNN1B and a gamma/SCNN1G subunit. Interacts with shroom1.

Its subcellular location is the apical cell membrane. It is found in the cell projection. The protein localises to the cilium. It localises to the cytoplasmic granule. The protein resides in the cytoplasm. Its subcellular location is the cytoplasmic vesicle. It is found in the secretory vesicle. The protein localises to the acrosome. It localises to the flagellum. The catalysed reaction is Na(+)(in) = Na(+)(out). With respect to regulation, originally identified and characterized by its inhibition by the diuretic drug amiloride. Its function is as follows. This is one of the three pore-forming subunits of the heterotrimeric epithelial sodium channel (ENaC), a critical regulator of sodium balance and fluid homeostasis. ENaC operates in epithelial tissues, where it mediates the electrodiffusion of sodium ions from extracellular fluid through the apical membrane of cells, with water following osmotically. It plays a key role in maintaining sodium homeostasis through electrogenic sodium reabsorption in the kidneys. This is Epithelial sodium channel subunit alpha from Xenopus laevis (African clawed frog).